The sequence spans 1063 residues: Endo-1,4-beta-xylanase 2 (1063 aa).

4 consecutive CBM-cenC domains span residues 5-146 (NIVM…GPAP), 183-313 (NIIK…LEGP), 348-482 (NHIF…IEGP), and 517-662 (NIVS…QGPS). In terms of domain architecture, GH10 spans 711-1006 (SGATVKIRQT…NEAGKRFLEI (296 aa)). The active-site Proton donor is the E840. Residue E941 is the Nucleophile of the active site.

It belongs to the glycosyl hydrolase 10 (cellulase F) family.

It carries out the reaction Endohydrolysis of (1-&gt;4)-beta-D-xylosidic linkages in xylans.. The protein operates within glycan degradation; xylan degradation. Binds to and hydrolyzes insoluble and soluble xylan substrates. This is Endo-1,4-beta-xylanase 2 from Arabidopsis thaliana (Mouse-ear cress).